The following is a 246-amino-acid chain: Large ribosomal subunit protein uL30-like 1 (246 aa).

Residue Ser54 is modified to Phosphoserine.

The protein belongs to the universal ribosomal protein uL30 family.

The protein is Large ribosomal subunit protein uL30-like 1 (RPL7L1) of Pongo abelii (Sumatran orangutan).